Here is a 151-residue protein sequence, read N- to C-terminus: 3-dehydroquinate dehydratase (151 aa).

Y24 (proton acceptor) is an active-site residue. The substrate site is built by N76, H82, and D89. H102 functions as the Proton donor in the catalytic mechanism. Residues 103–104 and R113 each bind substrate; that span reads VS.

It belongs to the type-II 3-dehydroquinase family. Homododecamer.

The enzyme catalyses 3-dehydroquinate = 3-dehydroshikimate + H2O. Its pathway is metabolic intermediate biosynthesis; chorismate biosynthesis; chorismate from D-erythrose 4-phosphate and phosphoenolpyruvate: step 3/7. Catalyzes a trans-dehydration via an enolate intermediate. The chain is 3-dehydroquinate dehydratase from Rhodopseudomonas palustris (strain TIE-1).